The following is a 316-amino-acid chain: Delta(1)-pyrroline-2-carboxylate reductase (316 aa).

Belongs to the ornithine cyclodeaminase/mu-crystallin family. As to quaternary structure, homodimer.

It catalyses the reaction L-proline + NAD(+) = 1-pyrroline-2-carboxylate + NADH + H(+). The catalysed reaction is L-proline + NADP(+) = 1-pyrroline-2-carboxylate + NADPH + H(+). Catalyzes the reduction of Delta(1)-pyrroline-2-carboxylate (Pyr2C) to L-proline, using preferentially NADPH over NADH as the electron donor. Together with LhpH, is involved in a metabolic pathway that converts trans-3-hydroxy-L-proline (t3LHyp) to L-proline. To a much lesser extent, can also reduce Delta(1)-piperideine-2-carboxylate (Pip2C) to L-pipecolate in vitro; however, this activity has likely no physiological significance in vivo since C.psychrerythraea probably possesses no ability to metabolize D-lysine via the L-pipecolate pathway. Does not show ornithine cyclodeaminase (OCD) activity. This chain is Delta(1)-pyrroline-2-carboxylate reductase, found in Colwellia psychrerythraea (strain 34H / ATCC BAA-681) (Vibrio psychroerythus).